Consider the following 576-residue polypeptide: Keratin, type II cytoskeletal 5 (576 aa).

Residues 1–163 form a head region; sequence MSRQSSVSFR…DPTIQRVRTE (163 aa). 4 positions are modified to phosphoserine: S5, S8, S16, and S21. T24 carries the post-translational modification Phosphothreonine; by CDK1. Phosphoserine occurs at positions 26, 36, 46, 60, 67, 71, 74, and 78. T147 bears the Phosphothreonine; by CDK1 mark. T162 is subject to Phosphothreonine; by AURKB. Residues 164 to 199 form a coil 1A region; sequence EREQIKTLNNKFASFIDKVRFLEQQNKVLDTKWTLL. Residues 164–477 form the IF rod domain; the sequence is EREQIKTLNN…KLLEGEECRL (314 aa). The segment at 200–218 is linker 1; sequence QEQGTKTIKQNLDPLFEQY. The coil 1B stretch occupies residues 219–311; it reads INNLRRQLDG…FFDAELSQMQ (93 aa). The tract at residues 312–334 is linker 12; sequence THVSDTSVVLSMDNNRSLDLDSI. Positions 335 to 473 are coil 2; that stretch reads IAEVKAQYED…ATYRKLLEGE (139 aa). The interval 474-576 is tail; the sequence is ECRLSGEGVG…TSSSRRSFKS (103 aa). R527 carries the post-translational modification Omega-N-methylarginine. The segment covering 540 to 557 has biased composition (gly residues); that stretch reads GFSASSGQGGGFSSGGGS. The interval 540–576 is disordered; it reads GFSASSGQGGGFSSGGGSSSSVKFVSTTSSSRRSFKS. A compositionally biased stretch (low complexity) spans 558–576; sequence SSSVKFVSTTSSSRRSFKS.

It belongs to the intermediate filament family. Heterodimer of a type I and a type II keratin. Heterodimer with type I keratin KRT25 leading to the formation of keratin intermediate filament (KIF) network. Forms a heterodimer (via 2B domains) with KRT14 (via 2B domains). Interacts with TCHP. Interacts with EPPK1. Interacts with AMELX. Interacts with PKP1 (via N-terminus) and PKP2. Phosphorylated by CDK1, AURKB and Rho-kinase, phosphorylation is regulated by the cell cycle. Thr-24 phosphorylation, mediated by CDK1, peaks during prometaphase or metaphase cells with phosphorylated filamentous structures evident throughout the cytoplasm during early mitosis. CDK1 phosphorylates Thr-24 in mitotic cells at the site of injury. Post-translationally, O-glycosylated. As to expression, expressed in the epidermis (at protein level) and testis (within pachytene spermatocytes).

Its subcellular location is the cytoplasm. Required for the formation of keratin intermediate filaments in the basal epidermis and maintenance of the skin barrier in response to mechanical stress. Regulates the recruitment of Langerhans cells to the epidermis, potentially by modulation of the abundance of macrophage chemotactic cytokines, macrophage inflammatory cytokines and CTNND1 localization in keratinocytes. This is Keratin, type II cytoskeletal 5 from Rattus norvegicus (Rat).